The following is a 577-amino-acid chain: Proline--tRNA ligase (577 aa).

The protein belongs to the class-II aminoacyl-tRNA synthetase family. ProS type 1 subfamily. As to quaternary structure, homodimer.

It localises to the cytoplasm. The enzyme catalyses tRNA(Pro) + L-proline + ATP = L-prolyl-tRNA(Pro) + AMP + diphosphate. Functionally, catalyzes the attachment of proline to tRNA(Pro) in a two-step reaction: proline is first activated by ATP to form Pro-AMP and then transferred to the acceptor end of tRNA(Pro). As ProRS can inadvertently accommodate and process non-cognate amino acids such as alanine and cysteine, to avoid such errors it has two additional distinct editing activities against alanine. One activity is designated as 'pretransfer' editing and involves the tRNA(Pro)-independent hydrolysis of activated Ala-AMP. The other activity is designated 'posttransfer' editing and involves deacylation of mischarged Ala-tRNA(Pro). The misacylated Cys-tRNA(Pro) is not edited by ProRS. The protein is Proline--tRNA ligase of Helicobacter pylori (strain ATCC 700392 / 26695) (Campylobacter pylori).